The sequence spans 307 residues: N-acetylmuramic acid 6-phosphate etherase (307 aa).

An SIS domain is found at 59–222 (TADRLRQGGR…STGVMVKLGK (164 aa)). Glu87 acts as the Proton donor in catalysis. The active site involves Glu118.

The protein belongs to the GCKR-like family. MurNAc-6-P etherase subfamily. Homodimer.

The catalysed reaction is N-acetyl-D-muramate 6-phosphate + H2O = N-acetyl-D-glucosamine 6-phosphate + (R)-lactate. The protein operates within amino-sugar metabolism; N-acetylmuramate degradation. Its function is as follows. Specifically catalyzes the cleavage of the D-lactyl ether substituent of MurNAc 6-phosphate, producing GlcNAc 6-phosphate and D-lactate. The protein is N-acetylmuramic acid 6-phosphate etherase of Nostoc sp. (strain PCC 7120 / SAG 25.82 / UTEX 2576).